The sequence spans 2349 residues: MPSTSNPSHVPVAIIGLACRFPGEATSPSKFWDLLKNGRDAYSPNTDRYNADAFYHPKASNRQNVLATKGGHFLKQDPYVFDAAFFNITAAEAISFDPKQRIAMEVVYEALENAGKTLPKVAGTQTACYIGSSMSDYRDAVVRDFGNSPKYHILGTCEEMISNRVSHFLDIHGPSATIHTACSSSLVATHLACQSLQSGESEMAIAGGVGMIITPDGNMHLNNLGFLNPEGHSRSFDENAGGYGRGEGCGILILKRLDRALEDGDSIRAVIRASGVNSDGWTQGVTMPSSQAQSALIKYVYESHGLDYGATQYVEAHGTGTKAGDPAEIGALHRTIGQGASKSRRLWIGSVKPNIGHLEAAAGVAGIIKGVLSMEHGMIPPNIYFSKPNPAIPLDEWNMAVPTKLTPWPASQTGRRMSVSGFGMGGTNGHVVLEAYKPQGKLTNGHTNGITNGIHKTRHSGKRLFVLSAQDQAGFKRLGNALVEHLDALGPAAATPEFLANLSHTLAVGRSGLAWRSSIIAESAPDLREKLATDPGEGAARSSGSEPRIGFVFTGQGAQWARMGVELLERPVFKASVIKSAETLKELGCEWDPIVELSKPQAESRLGVPEISQPICTVLQVALVDELKHWGVSPSKVVGHSSGEIGAAYSIGALSHRDAVAAAYFRGKSSNGAKKLGGGMMAVGCSREDADKLLSETKLKGGVATVACVNSPSSVTISGDAAALEELRVILEEKSVFARRLKVDVAYHSAHMNAVFAEYSAAIAHIEPAQAVEGGPIMVSSVTGSEVDSELLGPYYWTRNLISPVLFADAVKELVTPADGDGQNTVDLLIEIGPHSALGGPVEQILSHNGIKNVAYRSALTRGENAVDCSLKLAGELFLLGVPFELQKANGDSGSRMLTNLPPYPWNHSKSFRADSRLHREHLEQKFPTRSLIGAPVPMMAESEYTWRNFIRLADEPWLRGHTVGTTVLFPGAGIVSIILEAAQQLVDTGKTVRGFRMRDVNLFAAMALPEDLATEVIIHIRPHLISTVGSTAPGGWWEWTVSSCVGTDQLRDNARGLVAIDYEESRSEQINAEDKALVASQVADYHKILSECPEHYAHDKFYQHMTKASWSYGELFQGVENVRPGYGKTIFDIRVIDIGETFSKGQLERPFLINAATLDAVFQSWLGSTYNNGAFEFDKPFVPTSIGELEISVNIPGDGDYLMPGHCRSERYGFNELSADIAIFDKDLKNVFLSVKDFRTSELDMDSGKGDGDAAHVDPADINSEVKWNYALGLLKSEEITELVTKVASNDKLAELLRLTLHNNPAATVIELVSDESKISGASSAKLSKGLILPSQIRYVVVNPEAADADSFFKFFSLGEDGAPVAAERGPAELLIASSEVTDAAVLERLITLAKPDASILVAVNNKTTAAALSAKAFRVVTSIQDSKSIALYTSKKAPAADTSKLEAIILKPTTAQPAAQNFASILQKALELQGYSVVSQPWGTDIDVNDAKGKTYISLLELEQPLLDNLSKSDFENLRAVVLNCERLLWVTAGDNPSFGMVDGFARCIMSEIASTKFQVLHLSAATGLKYGSSLATRILQSDSTDNEYREVDGALQVARIFKSYNENESLRHHLEDTTSVVTLADQEDALRLTIGKPGLLDTLKFVPDERMLPPLQDHEVEIQVKATGLNFRDIMACMGLIPVRSLGQEASGIVLRTGAKATNFKPGDRVCTMNVGTHATKIRADYRVMTKIPDSMTFEEAASVAVVHTTAYYAFITIAKLRKGQSVLIHAAAGGVGQAAIQLAKHLGLITYVTVGTEDKRQLIREQYGIPDEHIFNSRDASFVKGVQRVTNGRGVDCVLNSLSGELLRASWGCLATFGHFIEIGLRDITNNMRLDMRPFRKSTSFTFINTHTLFEEDPAALGDILNESFKLMFAGALTAPSPLNAYPIGQVEEAFRTMQQGKHRGKMVLSFSDDAKAPVLRKAKDSLKLDPDATYLFVGGLGGLGRSLAKEFVASGARNIAFLSRSGDTTAQAKAIVDELAGQGIQVKAYRGDIASEASFLQAMEQCSQDLPPVKGVIQMAMVLRDIVFEKMSYDEWTVPVGPKVQGSWNLHKYFSHERPLDFMVICSSSSGIYGYPSQAQYAAGNTYQDALAHYRRSQGLNAISVNLGIMRDVGVLAETGTTGNIKLWEEVLGIREPAFHALMKSLINHQQRGSGDYPAQVCTGLGTADIMATHGLARPEYFNDPRFGPLAVTTVATDASADGQGSAVSLASRLSKVSTKDEAAEIITDALVNKTADILQMPPSEVDPGRPLYRYGVDSLVALEVRNWITREMKANMALLEILAAVPIESFAVKIAEKSKLVTV.

The Ketosynthase family 3 (KS3) domain maps to 9–435; the sequence is HVPVAIIGLA…GTNGHVVLEA (427 aa). Residues Cys182, His317, and His357 each act as for beta-ketoacyl synthase activity in the active site. The tract at residues 551–856 is malonyl-CoA:ACP transacylase (MAT) domain; the sequence is FVFTGQGAQW…SHNGIKNVAY (306 aa). Positions 930–1066 are N-terminal hotdog fold; sequence RSLIGAPVPM…GLVAIDYEES (137 aa). The region spanning 930–1250 is the PKS/mFAS DH domain; sequence RSLIGAPVPM…TSELDMDSGK (321 aa). The dehydratase (DH) domain stretch occupies residues 932-1244; sequence LIGAPVPMMA…SVKDFRTSEL (313 aa). Residue His962 is the Proton acceptor; for dehydratase activity of the active site. The segment at 1094-1250 is C-terminal hotdog fold; sequence PEHYAHDKFY…TSELDMDSGK (157 aa). The Proton donor; for dehydratase activity role is filled by Asp1160. The tract at residues 1641-1953 is enoyl reductase (ER) domain; sequence GLLDTLKFVP…QGKHRGKMVL (313 aa). Residues 1977–2157 form a ketoreductase (KR) domain region; that stretch reads ATYLFVGGLG…ISVNLGIMRD (181 aa). Residues 2267-2344 form the Carrier domain; that stretch reads EAAEIITDAL…SFAVKIAEKS (78 aa). Ser2304 carries the post-translational modification O-(pantetheine 4'-phosphoryl)serine.

Its pathway is secondary metabolite biosynthesis. Reducing polyketide synthase; part of the gene cluster that mediates the biosynthesis of hypothemycin, a resorcylic acid lactone (RAL) that irreversibly inhibits a subset of protein kinases with a conserved cysteine in the ATP binding site such as human ERK2. The first step is performed by both PKSs hmp3 and hmp8 and leads to the production of 7',8'-dehydrozearalenol (DHZ). The highly reducing PKS hpm8 synthesizes the reduced hexaketide (7S,11S,2E,8E)-7,11-dihydroxy-dodeca-2,8-dienoate, which is transferred downstream to the non-reducing PKS hpm3. Hpm3 then extends the reduced hexaketide to a nonaketide, after which regioselective cyclization and macrolactonization affords DHZ. The next step is the conversion of DHZ into aigialomycin C and is performed by the O-methyltransferase hmp5, the FAD-binding monooxygenase hmp7, and the cytochrome P450 monooxygenase hmp1. The wide substrate tolerance of the hmp5 and hmp7 implies that the reactions from DHZ to aigialomycin C can occur in any order. The steps from aigialomycin C to hypothemycin are less well established. The FAD-linked oxidoreductase hmp9 presumably catalyzes oxidation of the C-6' hydroxyl to a ketone. The timing of this oxidation is important, since the resulting enone functional group is a Michael acceptor that can react spontaneously with glutathione, an abundant metabolite in fungal cells. The glutathione S-transferase hmp2 catalyzes cis-trans isomerization of the 7',8' double bond with equilibrium favoring the trans isomer. The hpm6-encoded transporter might preferentially pump hypothemycin out of the cell relative to the trans isomer aigialomycin A. The cis-to-trans isomerization may be coupled with C-4' hydroxylation, since all known hypothemycin analogs containing the enone functional group also have hydroxyl groups at both C-4' and C-5'. This is Reducing polyketide synthase hmp8 from Hypomyces subiculosus (Nectria subiculosa).